The sequence spans 271 residues: Formamidopyrimidine-DNA glycosylase (271 aa).

The active-site Schiff-base intermediate with DNA is the Pro-2. The Proton donor role is filled by Glu-3. Lys-56 (proton donor; for beta-elimination activity) is an active-site residue. DNA contacts are provided by His-89, Arg-107, and Lys-151. The segment at 236 to 270 adopts an FPG-type zinc-finger fold; that stretch reads NVYGRAGLPCRQCGTPVRLLRQGQRSTYFCPHCQR. The active-site Proton donor; for delta-elimination activity is the Arg-260.

This sequence belongs to the FPG family. As to quaternary structure, monomer. The cofactor is Zn(2+).

The enzyme catalyses Hydrolysis of DNA containing ring-opened 7-methylguanine residues, releasing 2,6-diamino-4-hydroxy-5-(N-methyl)formamidopyrimidine.. It carries out the reaction 2'-deoxyribonucleotide-(2'-deoxyribose 5'-phosphate)-2'-deoxyribonucleotide-DNA = a 3'-end 2'-deoxyribonucleotide-(2,3-dehydro-2,3-deoxyribose 5'-phosphate)-DNA + a 5'-end 5'-phospho-2'-deoxyribonucleoside-DNA + H(+). Functionally, involved in base excision repair of DNA damaged by oxidation or by mutagenic agents. Acts as a DNA glycosylase that recognizes and removes damaged bases. Has a preference for oxidized purines, such as 7,8-dihydro-8-oxoguanine (8-oxoG). Has AP (apurinic/apyrimidinic) lyase activity and introduces nicks in the DNA strand. Cleaves the DNA backbone by beta-delta elimination to generate a single-strand break at the site of the removed base with both 3'- and 5'-phosphates. The protein is Formamidopyrimidine-DNA glycosylase of Acidovorax sp. (strain JS42).